Consider the following 540-residue polypeptide: Patellin-4 (540 aa).

Ser53 carries the phosphoserine modification. Positions 61-183 (FADLKESEKK…EKKTEDVVTE (123 aa)) form a coiled coil. The segment at 89-140 (LKTKKKESSPMKEKKEEVVKPEAEVEKKKEEAAEEKVEEEKKSEAVVTEEAP) is disordered. Over residues 94–140 (KESSPMKEKKEEVVKPEAEVEKKKEEAAEEKVEEEKKSEAVVTEEAP) the composition is skewed to basic and acidic residues. Lys249 is covalently cross-linked (Glycyl lysine isopeptide (Lys-Gly) (interchain with G-Cter in ubiquitin)). Positions 258–428 (GEEFGEDLAT…QYGGFKTVDD (171 aa)) constitute a CRAL-TRIO domain. One can recognise a GOLD domain in the interval 433–534 (NETVSEVVVK…KKKVLYRYRT (102 aa)).

This sequence belongs to the patellin family.

The protein resides in the membrane. It localises to the cytoplasm. Functionally, carrier protein that may be involved in membrane-trafficking events associated with cell plate formation during cytokinesis. Binds to some hydrophobic molecules such as phosphoinositides and promotes their transfer between the different cellular sites. The polypeptide is Patellin-4 (PATL4) (Arabidopsis thaliana (Mouse-ear cress)).